Reading from the N-terminus, the 481-residue chain is MHSKTRLPQAFIDKMTGILPNQLKIEDFIAVCQRPLRRAIRVNTLKISVEKFQIRAQEQGWVLTAIPWCAEGFWIELQEEPTPLGNSAEHLGGLCYIQEASSMLPVAALFHFFTPTTQSIVLDAAAAPGSKTTQIAAKMNNSGLIIGNEFSSSRIKMLHANIQRCGIKNVALTHFDARVFGKWLPGTFDAILLDAPCSGEGTVRKDKYAMNNWSQSSINEIASTQQELILSAFHALKEDGILIYSTCTLSHEENQDICFFLKDKFPEHIEFLDLETLFTDAKKTRTAEGFLHIWPQVYDSEGFFVAAIKKTKACTVAPAVKRLGKFPFIRPTRQKEQALYEYFASQFAITNIKGMLYQRDQELWLFPDPIKPLIKELRFSRLGIKIAEEFGNGRKSGFKSTHEFVTCFGDSIDAHKLELSAEQAQEFYQGRDIRDIDAKGFKGEVLLSYRGHVIGLGKSLDNRIKNSLPRELIRDNNLFIK.

S-adenosyl-L-methionine contacts are provided by residues 125 to 131 (AAAPGSK), Glu-149, Asp-176, and Asp-194. Cys-247 functions as the Nucleophile in the catalytic mechanism.

This sequence belongs to the class I-like SAM-binding methyltransferase superfamily. RsmB/NOP family.

The protein resides in the cytoplasm. The enzyme catalyses cytidine(1407) in 16S rRNA + S-adenosyl-L-methionine = 5-methylcytidine(1407) in 16S rRNA + S-adenosyl-L-homocysteine + H(+). Specifically methylates the cytosine at position 1407 (m5C1407) of 16S rRNA. The polypeptide is Ribosomal RNA small subunit methyltransferase F (Psychromonas ingrahamii (strain DSM 17664 / CCUG 51855 / 37)).